The sequence spans 77 residues: U-actitoxin-Avd12a (77 aa).

The signal sequence occupies residues 1 to 23 (MALFRMLFLCAVLVLLTSKEGMS). Positions 24 to 29 (YEEPEN) are excised as a propeptide. The 43-residue stretch at 31 to 73 (EGVACTGQYAESFCLNGGTCRYIQSIGEYYCICNGDYTGHRCE) folds into the EGF-like domain. Disulfide bonds link Cys-35–Cys-50, Cys-44–Cys-61, and Cys-63–Cys-72.

The protein belongs to the EGF domain peptide family.

The protein localises to the secreted. It is found in the nematocyst. Functionally, has both toxic and EGF activity. Its EGF activity consists of rounding cells (morphological change) and inducing tyrosine phosphorylation of the EGFR in A431 cells, but with a lower potency that human EGF. The sequence is that of U-actitoxin-Avd12a from Anemonia viridis (Snakelocks anemone).